We begin with the raw amino-acid sequence, 610 residues long: Phosphoprotein 85 (610 aa).

2 disordered regions span residues 462–530 and 543–610; these read NEGR…NISD and EEPM…DARL. Low complexity predominate over residues 467 to 478; it reads SSRASPSHSTST. The segment covering 484–495 has biased composition (polar residues); the sequence is PQSDRSTPTSIL. Low complexity-rich tracts occupy residues 503–515 and 552–567; these read SNSRSSSVSFSQE and SPQSTSSNNSMSRQSR. The segment covering 581–592 has biased composition (polar residues); that stretch reads VPSSQTRRQNNA. A compositionally biased stretch (basic and acidic residues) spans 600 to 610; that stretch reads RLTEMMNDARL.

It belongs to the herpesviridae pp85 family. Post-translationally, phosphorylated.

It localises to the virion tegument. Its subcellular location is the host cytoplasm. In Homo sapiens (Human), this protein is Phosphoprotein 85 (U14).